The chain runs to 444 residues: UDP-N-acetylmuramate--L-alanine ligase (444 aa).

An ATP-binding site is contributed by 110 to 116 (GAHGKTS).

This sequence belongs to the MurCDEF family.

It is found in the cytoplasm. The enzyme catalyses UDP-N-acetyl-alpha-D-muramate + L-alanine + ATP = UDP-N-acetyl-alpha-D-muramoyl-L-alanine + ADP + phosphate + H(+). It functions in the pathway cell wall biogenesis; peptidoglycan biosynthesis. Functionally, cell wall formation. In Streptococcus pneumoniae (strain ATCC 700669 / Spain 23F-1), this protein is UDP-N-acetylmuramate--L-alanine ligase.